Reading from the N-terminus, the 239-residue chain is DUP240 protein DFP3 (239 aa).

At 1-54 (MQPHLDNNSNNDDVKLDTLGEQNVLSSAENITLPEDTFKSYMTYLLYEMAHYKP) the chain is on the cytoplasmic side. The chain crosses the membrane as a helical span at residues 55–75 (MIFSFLALSVSILIVVIFHNV). The Extracellular segment spans residues 76 to 79 (KACD). A helical transmembrane segment spans residues 80–104 (VVFGFSIFVTSILFLSTLIPFNVYI). Residues 105 to 239 (SDEGFRIKLL…RKQYPDADIP (135 aa)) lie on the Cytoplasmic side of the membrane.

This sequence belongs to the DUP/COS family. As to quaternary structure, interacts according to large scale protein interaction studies with MEC3 and ULP1.

The protein localises to the membrane. The chain is DUP240 protein DFP3 from Saccharomyces cerevisiae (strain ATCC 204508 / S288c) (Baker's yeast).